Here is an 867-residue protein sequence, read N- to C-terminus: Leucine--tRNA ligase (867 aa).

The short motif at 43 to 53 (PYPSGRLHMGH) is the 'HIGH' region element. The short motif at 627-631 (KMSKS) is the 'KMSKS' region element. K630 is a binding site for ATP.

The protein belongs to the class-I aminoacyl-tRNA synthetase family.

Its subcellular location is the cytoplasm. It carries out the reaction tRNA(Leu) + L-leucine + ATP = L-leucyl-tRNA(Leu) + AMP + diphosphate. The chain is Leucine--tRNA ligase from Phenylobacterium zucineum (strain HLK1).